The chain runs to 147 residues: Large ribosomal subunit protein bL9 (147 aa).

It belongs to the bacterial ribosomal protein bL9 family.

Binds to the 23S rRNA. This Campylobacter fetus subsp. fetus (strain 82-40) protein is Large ribosomal subunit protein bL9.